A 556-amino-acid chain; its full sequence is Arginine--tRNA ligase (556 aa).

A 'HIGH' region motif is present at residues 132 to 142; the sequence is ANPTGDLHLGH.

It belongs to the class-I aminoacyl-tRNA synthetase family. Monomer.

It localises to the cytoplasm. The catalysed reaction is tRNA(Arg) + L-arginine + ATP = L-arginyl-tRNA(Arg) + AMP + diphosphate. This chain is Arginine--tRNA ligase, found in Listeria monocytogenes serotype 4a (strain HCC23).